The sequence spans 541 residues: Zinc finger CCHC domain-containing protein 7 (541 aa).

The tract at residues 111–144 (AEEKTQSPATSHSNKVAQKCKRNNKKPKPEERPG) is disordered. Residues 116-126 (QSPATSHSNKV) are compositionally biased toward polar residues. Residues Lys129, Lys136, Lys138, Lys234, and Lys249 each participate in a glycyl lysine isopeptide (Lys-Gly) (interchain with G-Cter in SUMO2) cross-link. 3 consecutive CCHC-type zinc fingers follow at residues 236-253 (VTCR…NCPL), 258-275 (RACC…GCPA), and 299-316 (KRCD…ACPE). A Glycyl lysine isopeptide (Lys-Gly) (interchain with G-Cter in SUMO2) cross-link involves residue Lys334. The segment at 343-360 (VYCYNCAQKGHYGHECTE) adopts a CCHC-type 4 zinc-finger fold. A disordered region spans residues 394–541 (VKDLKKNGDF…KKKKPKPSGL (148 aa)). Glycyl lysine isopeptide (Lys-Gly) (interchain with G-Cter in SUMO2) cross-links involve residues Lys408 and Lys431. Basic residues predominate over residues 418–434 (RRHHDMRKSRSPRKYRR). Residues 435–452 (WPRENKETQKEKTRSREG) are compositionally biased toward basic and acidic residues. Lys473 is covalently cross-linked (Glycyl lysine isopeptide (Lys-Gly) (interchain with G-Cter in SUMO2)). Residues 474 to 486 (PNASGCANNQKPS) are compositionally biased toward polar residues. A Phosphoserine modification is found at Ser477. Glycyl lysine isopeptide (Lys-Gly) (interchain with G-Cter in SUMO2) cross-links involve residues Lys484 and Lys487. Basic residues predominate over residues 487–497 (KSLHHASHYHR). Basic and acidic residues-rich tracts occupy residues 498-509 (LREERLLRESKR) and 517-527 (STEDGSHDDLF). Lys530 is covalently cross-linked (Glycyl lysine isopeptide (Lys-Gly) (interchain with G-Cter in SUMO2)). The segment covering 530-541 (KQKKKKPKPSGL) has biased composition (basic residues).

As to quaternary structure, component of a nucleolar TRAMP-like complex, an ATP-dependent exosome regulatory complex consisting of a helicase (MTREX), an oligadenylate polymerase (TENT4B or TENT4A), and a substrate specific RNA-binding factor (ZCCHC7 or ZCCHC8). Several TRAMP-like complexes exist with specific compositions and are associated with nuclear, or nucleolar RNA exosomes.

It localises to the nucleus. It is found in the nucleolus. This chain is Zinc finger CCHC domain-containing protein 7 (Zcchc7), found in Mus musculus (Mouse).